We begin with the raw amino-acid sequence, 433 residues long: Cell division protein FtsZ homolog 1, chloroplastic (433 aa).

A chloroplast-targeting transit peptide spans 1–66 (MAIIPLAQLN…TRSKSMRLRC (66 aa)). At Ser67 the chain carries N-acetylserine. Residues 83–87 (GGGNN), 170–172 (GTG), Glu201, Arg205, and Asp249 contribute to the GTP site. Positions 399 to 433 (GSSGQQENKGMSLPHQKQSPSTISTKSSSPRRLFF) are disordered. Low complexity predominate over residues 414–433 (QKQSPSTISTKSSSPRRLFF).

Belongs to the FtsZ family. In terms of assembly, aggregates to form a contractile ring-like structure; contraction of the ring was accompanied by an increase in the filament turnover rate. This aggregation is regulated in midchloroplast stroma by MIND1 (repressor) and MINE1 (promoter). Self-interacts and binds to FTSZ2-1 in heteromers to form two morphologically distinct types of filaments, termed type-I (smooth filaments) and type-II (rough filaments), in a GTP-dependent manner. Interacts with ARC3. Part of a complex made of ARC3, ARC6, FTSZ1 and FTSZ2. In terms of tissue distribution, in pollen grain, restricted to plastids of vegetative cells. Also present in pollen tubes plastids.

The protein localises to the plastid. It localises to the chloroplast stroma. It is found in the chloroplast thylakoid membrane. Exhibits GTPase activity. Component of the plastid division machinery that forms a contractile ring at the division site. Required for plastid division in a dose-dependent manner. Involved in epidermal plastids division in a MINE1-dependent manner. Involved in blue light-induced chloroplast movements. May regulate thylakoid development. In the vegetative shoot apex, at the shoot apical meristem (SAM), where the proplastid-to-chloroplast transition takes place, contributes equally with FTSZ2-1 in the L2 layer to plastid division. This is Cell division protein FtsZ homolog 1, chloroplastic from Arabidopsis thaliana (Mouse-ear cress).